We begin with the raw amino-acid sequence, 677 residues long: Methionine--tRNA ligase (677 aa).

A 'HIGH' region motif is present at residues 15–25 (PYANGSIHLGH). Residues cysteine 146, cysteine 149, cysteine 159, and cysteine 162 each contribute to the Zn(2+) site. Residues 333–337 (KMSKS) carry the 'KMSKS' region motif. Lysine 336 serves as a coordination point for ATP. The tRNA-binding domain occupies 575–677 (DFAKVDLRVA…AGAKPGHQVK (103 aa)).

It belongs to the class-I aminoacyl-tRNA synthetase family. MetG type 1 subfamily. In terms of assembly, homodimer. Zn(2+) is required as a cofactor.

It localises to the cytoplasm. The catalysed reaction is tRNA(Met) + L-methionine + ATP = L-methionyl-tRNA(Met) + AMP + diphosphate. Its function is as follows. Is required not only for elongation of protein synthesis but also for the initiation of all mRNA translation through initiator tRNA(fMet) aminoacylation. The sequence is that of Methionine--tRNA ligase from Escherichia coli O157:H7.